A 178-amino-acid polypeptide reads, in one-letter code: Signaling threshold-regulating transmembrane adapter 1 (178 aa).

Topologically, residues 1–23 (MSRENNCTTADLAWGIPSITQAW) are extracellular. N6 is a glycosylation site (N-linked (GlcNAc...) asparagine). The chain crosses the membrane as a helical; Signal-anchor for type III membrane protein span at residues 24–44 (GLWALFGVVTMLLLISLAALL). Residues 45 to 178 (SQWTRGRRRT…AYANSQPAPS (134 aa)) lie on the Cytoplasmic side of the membrane. 2 positions are modified to phosphoserine: S62 and S65. Y72 bears the Phosphotyrosine mark. The interval 72–75 (YGNL) is interaction with GRB2. Positions 81-102 (GRLSEESRSEEQDPSSGGLARG) are disordered. A phosphoserine mark is found at S84, S87, and S89. The residue at position 109 (Y109) is a Phosphotyrosine. The residue at position 126 (T126) is a Phosphothreonine. The tract at residues 128-133 (IKYCEV) is interaction with PTPN11. Y130 and Y151 each carry phosphotyrosine. The interval 151–154 (YASV) is interaction with CSK. Phosphoserine is present on S164. At Y170 the chain carries Phosphotyrosine. Residues 170 to 173 (YANS) are interaction with GRB2.

Homodimer; disulfide-linked. When phosphorylated, interacts with PTPN11/SHP2, GRB2 and CSK. Post-translationally, phosphorylated on tyrosines upon TCR activation; which promotes recruitment of PTPN11, GRB2 and CSK. As to expression, lymph node, spleen and thymus.

The protein resides in the cell membrane. Its function is as follows. Negatively regulates T-cell antigen receptor (TCR)-mediated signaling. Involved in positive selection of T-cells. This is Signaling threshold-regulating transmembrane adapter 1 (Sit1) from Rattus norvegicus (Rat).